Consider the following 452-residue polypeptide: Caspase-2 (452 aa).

A2 bears the N-acetylalanine mark. A propeptide spanning residues 2–169 is cleaved from the precursor; the sequence is AASSGRSQSS…TMEHSLDNGD (168 aa). The 90-residue stretch at 32–121 folds into the CARD domain; the sequence is MHPDHQETLK…GHLEDLLLTT (90 aa). Phosphoserine is present on S157. Active-site residues include H277 and C320. A propeptide spanning residues 326 to 333 is cleaved from the precursor; it reads DRGVDQQD. Residues 327–336 show a composition bias toward basic and acidic residues; the sequence is RGVDQQDGKN. Residues 327–349 form a disordered region; it reads RGVDQQDGKNHAQSPGCEESDAG. S340 carries the post-translational modification Phosphoserine.

Belongs to the peptidase C14A family. In terms of assembly, heterotetramer that consists of two anti-parallel arranged heterodimers, each one formed by a p18 subunit and a p12 subunit. Forms a complex named the PIDDosome with PIDD1 and CRADD. Interacts with NOL3 (via CARD domain); inhibits CASP2 activity in a phosphorylation-dependent manner. The mature protease can process its own propeptide, but not that of other caspases.

The catalysed reaction is Strict requirement for an Asp residue at P1, with 316-Asp being essential for proteolytic activity and has a preferred cleavage sequence of Val-Asp-Val-Ala-Asp-|-.. Involved in the activation cascade of caspases responsible for apoptosis execution. Might function by either activating some proteins required for cell death or inactivating proteins necessary for cell survival. Associates with PIDD1 and CRADD to form the PIDDosome, a complex that activates CASP2 and triggers apoptosis in response to genotoxic stress. This chain is Caspase-2 (Casp2), found in Rattus norvegicus (Rat).